Reading from the N-terminus, the 340-residue chain is Protein B17 (340 aa).

The protein belongs to the orthopoxvirus B17 protein family.

This Variola virus (isolate Human/India/Ind3/1967) (VARV) protein is Protein B17.